A 142-amino-acid polypeptide reads, in one-letter code: Large ribosomal subunit protein uL11 (142 aa).

Ala2 bears the N,N,N-trimethylalanine mark. N6,N6,N6-trimethyllysine is present on residues Lys4 and Lys40.

Belongs to the universal ribosomal protein uL11 family. As to quaternary structure, part of the ribosomal stalk of the 50S ribosomal subunit. Interacts with L10 and the large rRNA to form the base of the stalk. L10 forms an elongated spine to which L12 dimers bind in a sequential fashion forming a multimeric L10(L12)X complex. One or more lysine residues are methylated.

Its function is as follows. Forms part of the ribosomal stalk which helps the ribosome interact with GTP-bound translation factors. This Shigella flexneri protein is Large ribosomal subunit protein uL11.